Here is a 91-residue protein sequence, read N- to C-terminus: MTDVLVVLKVFPDSDEVNLDNLYTDISNKLPKEYRIIRKETEPIAFGLNALILYVQMPEQTEGGTDNLEEVVNNIQGVSHAEVVGITRLGF.

It belongs to the EF-1-beta/EF-1-delta family.

In terms of biological role, promotes the exchange of GDP for GTP in EF-1-alpha/GDP, thus allowing the regeneration of EF-1-alpha/GTP that could then be used to form the ternary complex EF-1-alpha/GTP/AAtRNA. In Saccharolobus islandicus (strain Y.N.15.51 / Yellowstone #2) (Sulfolobus islandicus), this protein is Elongation factor 1-beta.